Here is a 490-residue protein sequence, read N- to C-terminus: Glutamate--tRNA ligase (490 aa).

The 'HIGH' region motif lies at 12–22 (PSPTGTPHVGL). The 'KMSKS' region motif lies at 256 to 260 (KLSKR). Lys259 provides a ligand contact to ATP.

The protein belongs to the class-I aminoacyl-tRNA synthetase family. Glutamate--tRNA ligase type 1 subfamily. Monomer.

It localises to the cytoplasm. The catalysed reaction is tRNA(Glu) + L-glutamate + ATP = L-glutamyl-tRNA(Glu) + AMP + diphosphate. Functionally, catalyzes the attachment of glutamate to tRNA(Glu) in a two-step reaction: glutamate is first activated by ATP to form Glu-AMP and then transferred to the acceptor end of tRNA(Glu). This Mycobacterium sp. (strain KMS) protein is Glutamate--tRNA ligase.